A 401-amino-acid polypeptide reads, in one-letter code: Probable 2,3-bisphosphoglycerate-independent phosphoglycerate mutase (401 aa).

It belongs to the BPG-independent phosphoglycerate mutase family. A-PGAM subfamily.

It catalyses the reaction (2R)-2-phosphoglycerate = (2R)-3-phosphoglycerate. It participates in carbohydrate degradation; glycolysis; pyruvate from D-glyceraldehyde 3-phosphate: step 3/5. Functionally, catalyzes the interconversion of 2-phosphoglycerate and 3-phosphoglycerate. This chain is Probable 2,3-bisphosphoglycerate-independent phosphoglycerate mutase, found in Thermotoga sp. (strain RQ2).